Here is a 103-residue protein sequence, read N- to C-terminus: Small ribosomal subunit protein uS17 (103 aa).

The interval Ser78–Glu103 is disordered.

Belongs to the universal ribosomal protein uS17 family. Part of the 30S ribosomal subunit.

One of the primary rRNA binding proteins, it binds specifically to the 5'-end of 16S ribosomal RNA. This chain is Small ribosomal subunit protein uS17, found in Parasynechococcus marenigrum (strain WH8102).